A 368-amino-acid chain; its full sequence is UDP-N-acetylglucosamine--N-acetylmuramyl-(pentapeptide) pyrophosphoryl-undecaprenol N-acetylglucosamine transferase (368 aa).

UDP-N-acetyl-alpha-D-glucosamine-binding positions include 11-13, asparagine 123, arginine 164, serine 188, isoleucine 250, and glutamine 295; that span reads TGG.

Belongs to the glycosyltransferase 28 family. MurG subfamily.

The protein resides in the cell inner membrane. It catalyses the reaction di-trans,octa-cis-undecaprenyl diphospho-N-acetyl-alpha-D-muramoyl-L-alanyl-D-glutamyl-meso-2,6-diaminopimeloyl-D-alanyl-D-alanine + UDP-N-acetyl-alpha-D-glucosamine = di-trans,octa-cis-undecaprenyl diphospho-[N-acetyl-alpha-D-glucosaminyl-(1-&gt;4)]-N-acetyl-alpha-D-muramoyl-L-alanyl-D-glutamyl-meso-2,6-diaminopimeloyl-D-alanyl-D-alanine + UDP + H(+). The protein operates within cell wall biogenesis; peptidoglycan biosynthesis. In terms of biological role, cell wall formation. Catalyzes the transfer of a GlcNAc subunit on undecaprenyl-pyrophosphoryl-MurNAc-pentapeptide (lipid intermediate I) to form undecaprenyl-pyrophosphoryl-MurNAc-(pentapeptide)GlcNAc (lipid intermediate II). The polypeptide is UDP-N-acetylglucosamine--N-acetylmuramyl-(pentapeptide) pyrophosphoryl-undecaprenol N-acetylglucosamine transferase (Solidesulfovibrio magneticus (strain ATCC 700980 / DSM 13731 / RS-1) (Desulfovibrio magneticus)).